We begin with the raw amino-acid sequence, 91 residues long: MDLFKSFGGKNNSKNIAKERLQLLLVHDRADVSPKFLEMIKEDILNVISNYVDIDEAGLNVEITKEKRSDNTYIPALHANIPIKKMKQVIR.

It belongs to the MinE family.

Functionally, prevents the cell division inhibition by proteins MinC and MinD at internal division sites while permitting inhibition at polar sites. This ensures cell division at the proper site by restricting the formation of a division septum at the midpoint of the long axis of the cell. The polypeptide is Cell division topological specificity factor (Thermoanaerobacter pseudethanolicus (strain ATCC 33223 / 39E) (Clostridium thermohydrosulfuricum)).